The primary structure comprises 613 residues: Histone acetyltransferase KAT7 (613 aa).

The disordered stretch occupies residues 1-175 (MAIGVVKRNA…SDLSHRPKRR (175 aa)). Residues S12, S52, S55, S59, and S66 each carry the phosphoserine modification. Residues 44-59 (VTRSSARLSQSSQDSS) show a composition bias toward low complexity. A phosphothreonine mark is found at T87 and T90. Polar residues predominate over residues 98-107 (QTRSSGSETE). The residue at position 104 (S104) is a Phosphoserine. Position 106 is a phosphothreonine (T106). Basic and acidic residues predominate over residues 112–127 (FSDRETKNTADHDESP). S113 and S126 each carry phosphoserine. Residue T130 is modified to Phosphothreonine. Residues 136–147 (PSSESDIDISSP) show a composition bias toward low complexity. Basic and acidic residues predominate over residues 150-170 (SHDESIAKDMSLKDSGSDLSH). Residues S160, S164, S166, and S180 each carry the phosphoserine modification. The segment at 178-221 (HESYNFNMKCPTPGCNSLGHLTGKHERHFSISGCPLYHNLSADE) adopts a CCHHC-type zinc-finger fold. K201 and K279 each carry N6-acetyllysine. Residue K325 forms a Glycyl lysine isopeptide (Lys-Gly) (interchain with G-Cter in SUMO2) linkage. In terms of domain architecture, MYST-type HAT spans 334–609 (EGSNMIKTIA…MDPSCLKWTP (276 aa)). K340 participates in a covalent cross-link: Glycyl lysine isopeptide (Lys-Gly) (interchain with G-Cter in ubiquitin). The C2HC MYST-type zinc-finger motif lies at 367 to 392 (LYMCEFCLKYMKSQTILRRHMAKCVW). Residues C370, C373, H386, and C390 each contribute to the Zn(2+) site. The residue at position 434 (K434) is an N6-acetyllysine; by autocatalysis. Residues 477–479 (ILT) and 485–490 (RQGYGK) each bind acetyl-CoA. A Phosphoserine modification is found at S508. E510 serves as the catalytic Proton donor/acceptor. Acetyl-CoA contacts are provided by S514 and S523.

The protein belongs to the MYST (SAS/MOZ) family. As to quaternary structure, component of the HBO1 complex composed of KAT7/HBO1, MEAF6, ING4 or ING5, and one scaffold subunit: complexes containing BRPF scaffold (BRPF1, BRD1/BRPF2 or BRPF3) direct KAT7/HBO1 specificity towards H3K14ac, while complexes containing JADE scaffold (JADE1, JADE2 and JADE3) mediate acetylation of histone H4. Interacts with MCM2 and ORC1. Interacts with the androgen receptor (AR) in the presence of dihydrotestosterone. Interacts with CDT1. Interacts with MAP2K1 and CUL1. Interacts with p53/TP53; leading to inhibit histone acetyltransferase activity. Post-translationally, phosphorylated at Ser-52 and Ser-55 by ATR in response to DNA damage, promoting its ubiquitination by the CRL4(DDB2) complex and subsequent degradation. Phosphorylation at Ser-52 and Ser-55 by ATR in response to ultraviolet-induced DNA, promotes localization to DNA damage sites. Phosphorylation at Ser-59 by PLK1 during mitosis seems important for prereplicative complex formation and DNA replication licensing, and requires prior phosphorylation at Thr-87 and Thr-90 by CDK1. Phosphorylated by MAP2K1, which accelerates its degradation. In terms of processing, ubiquitinated at Lys-340, leading to proteasomal degradation. Ubiquitinated by the CRL4(DDB2) complex following phosphorylation by ATR, leading to its subsequent degradation. Autoacetylation at Lys-434 is required for proper function. In terms of tissue distribution, widely expressed in adult tissues.

The protein localises to the nucleus. Its subcellular location is the chromosome. It is found in the centromere. The protein resides in the cytoplasm. It localises to the cytosol. The catalysed reaction is L-lysyl-[protein] + acetyl-CoA = N(6)-acetyl-L-lysyl-[protein] + CoA + H(+). Its activity is regulated as follows. Histone acetyltransferase activity is inhibited by GMNN in the context of a complex with CDT1, inhibiting histone H4 acetylation and DNA replication licensing. In terms of biological role, catalytic subunit of histone acetyltransferase HBO1 complexes, which specifically mediate acetylation of histone H3 at 'Lys-14' (H3K14ac), thereby regulating various processes, such as gene transcription, protein ubiquitination, immune regulation, stem cell pluripotent and self-renewal maintenance and embryonic development. Some complexes also catalyze acetylation of histone H4 at 'Lys-5', 'Lys-8' and 'Lys-12' (H4K5ac, H4K8ac and H4K12ac, respectively), regulating DNA replication initiation, regulating DNA replication initiation. Specificity of the HBO1 complexes is determined by the scaffold subunit: complexes containing BRPF scaffold (BRPF1, BRD1/BRPF2 or BRPF3) direct KAT7/HBO1 specificity towards H3K14ac, while complexes containing JADE (JADE1, JADE2 and JADE3) scaffold direct KAT7/HBO1 specificity towards histone H4. H3K14ac promotes transcriptional elongation by facilitating the processivity of RNA polymerase II. Acts as a key regulator of hematopoiesis by forming a complex with BRD1/BRPF2, directing KAT7/HBO1 specificity towards H3K14ac and promoting erythroid differentiation. H3K14ac is also required for T-cell development. KAT7/HBO1-mediated acetylation facilitates two consecutive steps, licensing and activation, in DNA replication initiation: H3K14ac facilitates the activation of replication origins, and histone H4 acetylation (H4K5ac, H4K8ac and H4K12ac) facilitates chromatin loading of MCM complexes, promoting DNA replication licensing. Acts as a positive regulator of centromeric CENPA assembly: recruited to centromeres and mediates histone acetylation, thereby preventing centromere inactivation mediated by SUV39H1, possibly by increasing histone turnover/exchange. Involved in nucleotide excision repair: phosphorylation by ATR in response to ultraviolet irradiation promotes its localization to DNA damage sites, where it mediates histone acetylation to facilitate recruitment of XPC at the damaged DNA sites. Acts as an inhibitor of NF-kappa-B independently of its histone acetyltransferase activity. Functionally, plays a central role in the maintenance of leukemia stem cells in acute myeloid leukemia (AML). Acts by mediating acetylation of histone H3 at 'Lys-14' (H3K14ac), thereby facilitating the processivity of RNA polymerase II to maintain the high expression of key genes, such as HOXA9 and HOXA10 that help to sustain the functional properties of leukemia stem cells. The polypeptide is Histone acetyltransferase KAT7 (Mus musculus (Mouse)).